The primary structure comprises 291 residues: N-acetylmannosamine kinase (291 aa).

Residues 5–12 and 132–139 contribute to the ATP site; these read AIDIGGTK and GVGGGVVC. Zn(2+) is bound by residues His-156, Cys-166, Cys-168, and Cys-173.

The protein belongs to the ROK (NagC/XylR) family. NanK subfamily. Homodimer.

The enzyme catalyses an N-acyl-D-mannosamine + ATP = an N-acyl-D-mannosamine 6-phosphate + ADP + H(+). Its pathway is amino-sugar metabolism; N-acetylneuraminate degradation; D-fructose 6-phosphate from N-acetylneuraminate: step 2/5. In terms of biological role, catalyzes the phosphorylation of N-acetylmannosamine (ManNAc) to ManNAc-6-P. The sequence is that of N-acetylmannosamine kinase from Salmonella arizonae (strain ATCC BAA-731 / CDC346-86 / RSK2980).